A 286-amino-acid chain; its full sequence is Pantothenate synthetase (286 aa).

30–37 (MGNLHDGH) contributes to the ATP binding site. Histidine 37 serves as the catalytic Proton donor. Residue glutamine 61 coordinates (R)-pantoate. Glutamine 61 serves as a coordination point for beta-alanine. An ATP-binding site is contributed by 148–151 (GKKD). Glutamine 154 contributes to the (R)-pantoate binding site. ATP contacts are provided by residues valine 177 and 185 to 188 (LSSR).

It belongs to the pantothenate synthetase family. As to quaternary structure, homodimer.

The protein localises to the cytoplasm. It carries out the reaction (R)-pantoate + beta-alanine + ATP = (R)-pantothenate + AMP + diphosphate + H(+). The protein operates within cofactor biosynthesis; (R)-pantothenate biosynthesis; (R)-pantothenate from (R)-pantoate and beta-alanine: step 1/1. Its function is as follows. Catalyzes the condensation of pantoate with beta-alanine in an ATP-dependent reaction via a pantoyl-adenylate intermediate. The sequence is that of Pantothenate synthetase from Psychrobacter sp. (strain PRwf-1).